The chain runs to 440 residues: D-serine dehydratase (440 aa).

The residue at position 116 (K116) is an N6-(pyridoxal phosphate)lysine.

This sequence belongs to the serine/threonine dehydratase family. DsdA subfamily. Monomer. It depends on pyridoxal 5'-phosphate as a cofactor.

It catalyses the reaction D-serine = pyruvate + NH4(+). This Salmonella dublin (strain CT_02021853) protein is D-serine dehydratase.